The chain runs to 901 residues: HTH-type transcriptional regulator MalT (901 aa).

ATP is bound at residue 39 to 46 (SPAGYGKT). Residues 829–894 (ELIRTSPLTQ…AAVQHAQKLL (66 aa)) enclose the HTH luxR-type domain. The H-T-H motif DNA-binding region spans 853 to 872 (NEQIAGELEVAATTIKTHIR).

This sequence belongs to the MalT family. As to quaternary structure, monomer in solution. Oligomerizes to an active state in the presence of the positive effectors ATP and maltotriose.

Activated by ATP and maltotriose, which are both required for DNA binding. In terms of biological role, positively regulates the transcription of the maltose regulon whose gene products are responsible for uptake and catabolism of malto-oligosaccharides. Specifically binds to the promoter region of its target genes, recognizing a short DNA motif called the MalT box. This is HTH-type transcriptional regulator MalT from Escherichia coli O127:H6 (strain E2348/69 / EPEC).